A 282-amino-acid chain; its full sequence is Pantothenate synthetase (282 aa).

30–37 (MGFLHDGH) is a binding site for ATP. The active-site Proton donor is histidine 37. Glutamine 60 lines the (R)-pantoate pocket. Glutamine 60 contacts beta-alanine. Residue 146-149 (GQKD) coordinates ATP. Glutamine 152 contributes to the (R)-pantoate binding site. Residues isoleucine 175 and 183 to 186 (KSSR) contribute to the ATP site.

It belongs to the pantothenate synthetase family. As to quaternary structure, homodimer.

It localises to the cytoplasm. The catalysed reaction is (R)-pantoate + beta-alanine + ATP = (R)-pantothenate + AMP + diphosphate + H(+). The protein operates within cofactor biosynthesis; (R)-pantothenate biosynthesis; (R)-pantothenate from (R)-pantoate and beta-alanine: step 1/1. Catalyzes the condensation of pantoate with beta-alanine in an ATP-dependent reaction via a pantoyl-adenylate intermediate. The chain is Pantothenate synthetase from Campylobacter jejuni (strain RM1221).